The primary structure comprises 30 residues: Photosystem I reaction center subunit XII (30 aa).

The helical transmembrane segment at 7–29 (VYTVLLIALLASVLAIRLGSTLY) threads the bilayer.

This sequence belongs to the PsaM family.

Its subcellular location is the plastid. The protein resides in the chloroplast thylakoid membrane. The polypeptide is Photosystem I reaction center subunit XII (Trieres chinensis (Marine centric diatom)).